The primary structure comprises 127 residues: MFRTMMNGKIHRATVTEANLNYVGSITIDSAILEAVDMLPNEKVQIVNNNNGARIETYIIPGEPGSGVICLNGAAARHVQVGDVVIIMSYGMFTDEEAKTHEPKIVVLDEKNHIEMILPEEKAHTTL.

The active-site Schiff-base intermediate with substrate; via pyruvic acid is Ser25. Pyruvic acid (Ser) is present on Ser25. Residue Thr57 coordinates substrate. Residue Tyr58 is the Proton donor of the active site. A substrate-binding site is contributed by 73-75 (GAA).

It belongs to the PanD family. As to quaternary structure, heterooctamer of four alpha and four beta subunits. It depends on pyruvate as a cofactor. Post-translationally, is synthesized initially as an inactive proenzyme, which is activated by self-cleavage at a specific serine bond to produce a beta-subunit with a hydroxyl group at its C-terminus and an alpha-subunit with a pyruvoyl group at its N-terminus.

The protein resides in the cytoplasm. It carries out the reaction L-aspartate + H(+) = beta-alanine + CO2. It functions in the pathway cofactor biosynthesis; (R)-pantothenate biosynthesis; beta-alanine from L-aspartate: step 1/1. Catalyzes the pyruvoyl-dependent decarboxylation of aspartate to produce beta-alanine. This Listeria monocytogenes serovar 1/2a (strain ATCC BAA-679 / EGD-e) protein is Aspartate 1-decarboxylase.